A 130-amino-acid chain; its full sequence is Small ribosomal subunit protein uS8 (130 aa).

This sequence belongs to the universal ribosomal protein uS8 family. Part of the 30S ribosomal subunit.

Its function is as follows. One of the primary rRNA binding proteins, it binds directly to 16S rRNA central domain where it helps coordinate assembly of the platform of the 30S subunit. The protein is Small ribosomal subunit protein uS8 of Methanocorpusculum labreanum (strain ATCC 43576 / DSM 4855 / Z).